Reading from the N-terminus, the 109-residue chain is uncharacterized protein (109 aa).

The interval 1–25 (METKPNALTGTSLSSTSGQTTQKSI) is disordered. The segment covering 8–22 (LTGTSLSSTSGQTTQ) has biased composition (low complexity). A helical membrane pass occupies residues 42–62 (TFGLMAILNLALLLWTLLATL). Positions 84–109 (TTLQKNTPSAKNGLKNTTNKHSHEDM) are disordered. The segment covering 91–102 (PSAKNGLKNTTN) has biased composition (polar residues).

It is found in the host membrane. This is an uncharacterized protein from Bdellovibrio phage phiMH2K (Bacteriophage phiMH2K).